Reading from the N-terminus, the 350-residue chain is 8-amino-7-oxononanoate synthase (350 aa).

Gly-77–Tyr-78 serves as a coordination point for pyridoxal 5'-phosphate. His-102 serves as a coordination point for substrate. Residues Ser-150, Asp-175 to His-178, and Thr-204 to Lys-207 contribute to the pyridoxal 5'-phosphate site. An N6-(pyridoxal phosphate)lysine modification is found at Lys-207. Thr-316 is a substrate binding site.

The protein belongs to the class-II pyridoxal-phosphate-dependent aminotransferase family. BioF subfamily. In terms of assembly, homodimer. Requires pyridoxal 5'-phosphate as cofactor.

The enzyme catalyses 6-carboxyhexanoyl-[ACP] + L-alanine + H(+) = (8S)-8-amino-7-oxononanoate + holo-[ACP] + CO2. It participates in cofactor biosynthesis; biotin biosynthesis. In terms of biological role, catalyzes the decarboxylative condensation of pimeloyl-[acyl-carrier protein] and L-alanine to produce 8-amino-7-oxononanoate (AON), [acyl-carrier protein], and carbon dioxide. The sequence is that of 8-amino-7-oxononanoate synthase from Methylocella silvestris (strain DSM 15510 / CIP 108128 / LMG 27833 / NCIMB 13906 / BL2).